A 335-amino-acid polypeptide reads, in one-letter code: Beta-ketoacyl-[acyl-carrier-protein] synthase III 2 (335 aa).

Catalysis depends on residues Cys-116 and His-256. The tract at residues 257–261 (QANVR) is ACP-binding. Asn-286 is an active-site residue.

The protein belongs to the thiolase-like superfamily. FabH family. As to quaternary structure, homodimer.

The protein localises to the cytoplasm. The enzyme catalyses malonyl-[ACP] + acetyl-CoA + H(+) = 3-oxobutanoyl-[ACP] + CO2 + CoA. The protein operates within lipid metabolism; fatty acid biosynthesis. Catalyzes the condensation reaction of fatty acid synthesis by the addition to an acyl acceptor of two carbons from malonyl-ACP. Catalyzes the first condensation reaction which initiates fatty acid synthesis and may therefore play a role in governing the total rate of fatty acid production. Possesses both acetoacetyl-ACP synthase and acetyl transacylase activities. Its substrate specificity determines the biosynthesis of branched-chain and/or straight-chain of fatty acids. This is Beta-ketoacyl-[acyl-carrier-protein] synthase III 2 from Bacteroides thetaiotaomicron (strain ATCC 29148 / DSM 2079 / JCM 5827 / CCUG 10774 / NCTC 10582 / VPI-5482 / E50).